Consider the following 479-residue polypeptide: Anaerobic nitric oxide reductase flavorubredoxin (479 aa).

The interval 30-210 (LRGSSYNSYL…PFSRLVTPKI (181 aa)) is zinc metallo-hydrolase. Positions 79, 81, 83, 147, 166, and 227 each coordinate Fe cation. One can recognise a Flavodoxin-like domain in the interval 254–393 (ITIFYDTMSN…LCREHGREIA (140 aa)). Residues 260–264 (TMSNN) and 342–369 (AFGSHGWSGGAVDRLSTRLQDAGFEMSL) contribute to the FMN site. The region spanning 423–474 (GPRMQCSVCQWIYDPAKGEPMQDVAPGTPWSEVPDNFLCPECSLGKDVFDEL) is the Rubredoxin-like domain. Cys-428, Cys-431, Cys-461, and Cys-464 together coordinate Fe cation.

The protein in the N-terminal section; belongs to the zinc metallo-hydrolase group 3 family. As to quaternary structure, homotetramer. The cofactor is Fe cation. FMN is required as a cofactor.

The protein localises to the cytoplasm. It participates in nitrogen metabolism; nitric oxide reduction. In terms of biological role, anaerobic nitric oxide reductase; uses NADH to detoxify nitric oxide (NO), protecting several 4Fe-4S NO-sensitive enzymes. Has at least 2 reductase partners, only one of which (NorW, flavorubredoxin reductase) has been identified. NO probably binds to the di-iron center; electrons enter from the NorW at rubredoxin and are transferred sequentially to the FMN center and the di-iron center. Also able to function as an aerobic oxygen reductase. This is Anaerobic nitric oxide reductase flavorubredoxin from Escherichia coli O6:H1 (strain CFT073 / ATCC 700928 / UPEC).